Here is a 668-residue protein sequence, read N- to C-terminus: UvrABC system protein B (668 aa).

The 152-residue stretch at 25-176 (THLQSGHSRQ…DQRQLLRNLA (152 aa)) folds into the Helicase ATP-binding domain. 38 to 45 (GATGTGKT) is a binding site for ATP. The Beta-hairpin signature appears at 91–114 (YYDYYQPEAYIPVTDTFIEKTASI). A Helicase C-terminal domain is found at 429–591 (QVDDLLAEIQ…ITPQPVKKGS (163 aa)). A UVR domain is found at 626–661 (PELITQLEAQMKEAAKNLEFEEAAKYRDRIKNLRSK).

Belongs to the UvrB family. As to quaternary structure, forms a heterotetramer with UvrA during the search for lesions. Interacts with UvrC in an incision complex.

Its subcellular location is the cytoplasm. Its function is as follows. The UvrABC repair system catalyzes the recognition and processing of DNA lesions. A damage recognition complex composed of 2 UvrA and 2 UvrB subunits scans DNA for abnormalities. Upon binding of the UvrA(2)B(2) complex to a putative damaged site, the DNA wraps around one UvrB monomer. DNA wrap is dependent on ATP binding by UvrB and probably causes local melting of the DNA helix, facilitating insertion of UvrB beta-hairpin between the DNA strands. Then UvrB probes one DNA strand for the presence of a lesion. If a lesion is found the UvrA subunits dissociate and the UvrB-DNA preincision complex is formed. This complex is subsequently bound by UvrC and the second UvrB is released. If no lesion is found, the DNA wraps around the other UvrB subunit that will check the other stand for damage. This Acaryochloris marina (strain MBIC 11017) protein is UvrABC system protein B.